We begin with the raw amino-acid sequence, 745 residues long: Poly(A) polymerase alpha (745 aa).

Residues 1–17 (MPFPVTTQGSQQTQPPQ) show a composition bias toward low complexity. The tract at residues 1 to 22 (MPFPVTTQGSQQTQPPQKHYGI) is disordered. A phosphoserine mark is found at serine 10 and serine 24. Residues 100–102 (FGS), threonine 109, 113–115 (DID), aspartate 167, lysine 228, tyrosine 237, and 246–247 (GV) contribute to the ATP site. Aspartate 113, aspartate 115, and aspartate 167 together coordinate Mg(2+). Glycyl lysine isopeptide (Lys-Gly) (interchain with G-Cter in SUMO) cross-links involve residues lysine 444, lysine 445, lysine 506, and lysine 507. The short motif at 490 to 507 (RKQLHQLLPNHVLQKKKK) is the Nuclear localization signal 1 element. The tract at residues 508–643 (HSTEGVKLTA…TSGNAATKIP (136 aa)) is ser/Thr-rich. Residues 523 to 534 (LDLSMDSDNSMS) show a composition bias toward low complexity. Disordered regions lie at residues 523 to 565 (LDLS…AVTA) and 577 to 704 (SVPQ…SETI). A compositionally biased stretch (polar residues) spans 535 to 557 (VPSPTSATKTSPLNSSGSSQGRN). 2 positions are modified to phosphoserine: serine 537 and serine 558. 2 stretches are compositionally biased toward low complexity: residues 583–594 (SSESSGGTSSES) and 611–640 (TVSR…NAAT). N6-acetyllysine is present on residues lysine 641 and lysine 650. Residues 650 to 665 (KRTSSPHKEESPKKTK) carry the Nuclear localization signal 2 motif. Composition is skewed to basic and acidic residues over residues 655-666 (PHKEESPKKTKT) and 682-692 (GHDKTEAKEQL). The segment at 677-745 (CLALSGHDKT…KNSIKLRLNR (69 aa)) is required for interaction with NUDT21. Over residues 694–704 (TETSTTQSETI) the composition is skewed to low complexity. The residue at position 736 (lysine 736) is an N6-acetyllysine; alternate. Lysine 736 participates in a covalent cross-link: Glycyl lysine isopeptide (Lys-Gly) (interchain with G-Cter in SUMO); alternate. Serine 738 is subject to Phosphoserine. Position 740 is an N6-acetyllysine; alternate (lysine 740). Lysine 740 participates in a covalent cross-link: Glycyl lysine isopeptide (Lys-Gly) (interchain with G-Cter in SUMO); alternate.

This sequence belongs to the poly(A) polymerase family. As to quaternary structure, monomer. Found in a complex with CPSF1, FIP1L1 and PAPOLA. Interacts with AHCYL1 and FIP1L1; the interaction with AHCYL1 seems to increase interaction with FIP1L1. Interacts with NUDT21; the interaction is diminished by acetylation. Interacts with KPNB1; the interaction promotes PAP nuclear import and is inhibited by acetylation of PAP. It depends on Mg(2+) as a cofactor. The cofactor is Mn(2+). In terms of processing, polysumoylated. Varying sumoylation depending on tissue- and cell-type. Highly sumoylated in bladder and NIH 3T3 cells. Sumoylation is required for nuclear localization and enhances PAP stability. Desumoylated by SENP1. Inhibits polymerase activity. Hyperphosphorylation on multiple CDK2 consensus and non-consensus sites in the C-terminal Ser/Thr-rich region represses PAP activity in late M-phase. Phosphorylation/dephosphorylation may regulate the interaction between PAP and CPSF. Post-translationally, acetylated in the C-terminus. Acetylation decreases interaction with NUDT21 and KPNB1, and inhibits nuclear localization through inhibiting binding to the importin alpha/beta complex.

It localises to the cytoplasm. Its subcellular location is the nucleus. The enzyme catalyses RNA(n) + ATP = RNA(n)-3'-adenine ribonucleotide + diphosphate. Polymerase that creates the 3'-poly(A) tail of mRNA's. Also required for the endoribonucleolytic cleavage reaction at some polyadenylation sites. May acquire specificity through interaction with a cleavage and polyadenylation specificity factor (CPSF) at its C-terminus. In Homo sapiens (Human), this protein is Poly(A) polymerase alpha (PAPOLA).